The sequence spans 80 residues: MAVKKPENMTFEATIEELDSLVDQLENGDLALDDALRKFERGIALARAGQTKLSDAEQRVSILLSEDDEAPLSDFNPESE.

It belongs to the XseB family. In terms of assembly, heterooligomer composed of large and small subunits.

The protein localises to the cytoplasm. The catalysed reaction is Exonucleolytic cleavage in either 5'- to 3'- or 3'- to 5'-direction to yield nucleoside 5'-phosphates.. Bidirectionally degrades single-stranded DNA into large acid-insoluble oligonucleotides, which are then degraded further into small acid-soluble oligonucleotides. The chain is Exodeoxyribonuclease 7 small subunit from Vibrio campbellii (strain ATCC BAA-1116).